Reading from the N-terminus, the 426-residue chain is Casein kinase I (426 aa).

The region spanning 9-278 is the Protein kinase domain; that stretch reads YRISRKIGGG…LRKLLREMFV (270 aa). Residues 15-23 and K38 each bind ATP; that span reads IGGGSFGEI. Catalysis depends on D128, which acts as the Proton acceptor. Disordered regions lie at residues 340-360 and 377-426; these read TTTT…TVSN and PSYN…PPAK. Positions 345–360 are enriched in polar residues; it reads SSSQPSNVKNISTVSN. The span at 386 to 404 shows a compositional bias: low complexity; the sequence is QSPQQTTTTTSSSNPNQTT. A compositionally biased stretch (polar residues) spans 414–426; that stretch reads PQSSSTTTKPPAK.

It belongs to the protein kinase superfamily. CK1 Ser/Thr protein kinase family. Casein kinase I subfamily. Monomer. Post-translationally, autophosphorylated.

Its subcellular location is the cytoplasm. It is found in the nucleus. It catalyses the reaction L-seryl-[protein] + ATP = O-phospho-L-seryl-[protein] + ADP + H(+). The enzyme catalyses L-threonyl-[protein] + ATP = O-phospho-L-threonyl-[protein] + ADP + H(+). Its function is as follows. Casein kinases are operationally defined by their preferential utilization of acidic proteins such as caseins as substrates. Can phosphorylate a large number of proteins. May have a role in DNA repair mechanism and support vegetative growth of the cells. This Dictyostelium discoideum (Social amoeba) protein is Casein kinase I (cak1-1).